Reading from the N-terminus, the 583-residue chain is Glycine--tRNA ligase (583 aa).

2 residues coordinate substrate: R100 and E166. Residues 198–200, 208–213, 328–329, and 443–446 each bind ATP; these read RNE, VRLREF, EV, and GTDR. Residue 213–217 coordinates substrate; sequence FTIME. 439-443 is a substrate binding site; sequence EPSFG.

Belongs to the class-II aminoacyl-tRNA synthetase family.

It localises to the cytoplasm. It carries out the reaction tRNA(Gly) + glycine + ATP = glycyl-tRNA(Gly) + AMP + diphosphate. Functionally, catalyzes the attachment of glycine to tRNA(Gly). In Aeropyrum pernix (strain ATCC 700893 / DSM 11879 / JCM 9820 / NBRC 100138 / K1), this protein is Glycine--tRNA ligase.